The sequence spans 1408 residues: ARF guanine-nucleotide exchange factor 1 (1408 aa).

A Phosphoserine modification is found at Ser49. Residues 262 to 287 form a disordered region; it reads TTTSDNDLSSTDDDSAVADDNKNEKP. The SEC7 domain maps to 552–706; it reads FNEKAKKGIQ…IIMLNTDSHN (155 aa).

Interacts (via N-terminal region) with SEC21 (via C-terminus). Interacts with GMH1. Interacts with DRS2.

The protein resides in the cytoplasm. Its subcellular location is the cytosol. It is found in the membrane. It localises to the endoplasmic reticulum. The protein localises to the mitochondrion. Functionally, activates the ARF proteins by exchanging bound GDP for free GTP. Plays a role in maintaining mitochondrial morphology, and in the turnover of mitochondria through mitophagy. This chain is ARF guanine-nucleotide exchange factor 1 (GEA1), found in Saccharomyces cerevisiae (strain ATCC 204508 / S288c) (Baker's yeast).